The sequence spans 901 residues: Protein translocase subunit SecA (901 aa).

ATP-binding positions include Q87, 105–109 (GEGKT), and D512. C885, C887, C896, and H897 together coordinate Zn(2+).

This sequence belongs to the SecA family. As to quaternary structure, monomer and homodimer. Part of the essential Sec protein translocation apparatus which comprises SecA, SecYEG and auxiliary proteins SecDF-YajC and YidC. It depends on Zn(2+) as a cofactor.

Its subcellular location is the cell inner membrane. The protein resides in the cytoplasm. It carries out the reaction ATP + H2O + cellular proteinSide 1 = ADP + phosphate + cellular proteinSide 2.. Part of the Sec protein translocase complex. Interacts with the SecYEG preprotein conducting channel. Has a central role in coupling the hydrolysis of ATP to the transfer of proteins into and across the cell membrane, serving both as a receptor for the preprotein-SecB complex and as an ATP-driven molecular motor driving the stepwise translocation of polypeptide chains across the membrane. The protein is Protein translocase subunit SecA of Salmonella paratyphi B (strain ATCC BAA-1250 / SPB7).